Here is a 217-residue protein sequence, read N- to C-terminus: Large ribosomal subunit protein uL1 (217 aa).

Belongs to the universal ribosomal protein uL1 family.

This is Large ribosomal subunit protein uL1 (RPL10A) from Eremothecium gossypii (strain ATCC 10895 / CBS 109.51 / FGSC 9923 / NRRL Y-1056) (Yeast).